The chain runs to 113 residues: Na(+)/H(+) antiporter subunit C (113 aa).

A run of 3 helical transmembrane segments spans residues L4 to L21, V28 to G47, and P67 to V89.

It belongs to the CPA3 antiporters (TC 2.A.63) subunit C family. As to quaternary structure, forms a heterooligomeric complex that consists of seven subunits: MrpA, MrpB, MrpC, MrpD, MrpE, MrpF and MrpG.

It is found in the cell membrane. Its function is as follows. Mrp complex is a Na(+)/H(+) antiporter that is considered to be the major Na(+) excretion system in B.subtilis. Has a major role in Na(+) resistance and a minor role in Na(+)- and K(+)-dependent pH homeostasis as compared to TetB. MrpA may be the actual Na(+)/H(+) antiporter, although the six other Mrp proteins are all required for Na(+)/H(+) antiport activity and Na(+) resistance. MrpA is required for initiation of sporulation when external Na(+) concentration increases. Also transports Li(+) but not K(+), Ca(2+) or Mg(2+). The polypeptide is Na(+)/H(+) antiporter subunit C (mrpC) (Bacillus subtilis (strain 168)).